Here is a 130-residue protein sequence, read N- to C-terminus: Small ribosomal subunit protein uS9 (130 aa).

Residues 111–130 (VERKKVGLHKARRATQFSKR) are disordered. Positions 116–130 (VGLHKARRATQFSKR) are enriched in basic residues.

This sequence belongs to the universal ribosomal protein uS9 family.

The polypeptide is Small ribosomal subunit protein uS9 (Xylella fastidiosa (strain M23)).